Reading from the N-terminus, the 435-residue chain is uncharacterized protein (435 aa).

Positions 7-58 (PFPITKLPLVPRCKILKFFDYGDLLDISLCSKRMAQTVRDIHITADLHYLTL) constitute an F-box domain.

This is an uncharacterized protein from Caenorhabditis elegans.